The primary structure comprises 280 residues: Ribosomal RNA small subunit methyltransferase A (280 aa).

6 residues coordinate S-adenosyl-L-methionine: N11, L13, G37, E57, D85, and N106.

It belongs to the class I-like SAM-binding methyltransferase superfamily. rRNA adenine N(6)-methyltransferase family. RsmA subfamily.

The protein resides in the cytoplasm. The catalysed reaction is adenosine(1518)/adenosine(1519) in 16S rRNA + 4 S-adenosyl-L-methionine = N(6)-dimethyladenosine(1518)/N(6)-dimethyladenosine(1519) in 16S rRNA + 4 S-adenosyl-L-homocysteine + 4 H(+). In terms of biological role, specifically dimethylates two adjacent adenosines (A1518 and A1519) in the loop of a conserved hairpin near the 3'-end of 16S rRNA in the 30S particle. May play a critical role in biogenesis of 30S subunits. The chain is Ribosomal RNA small subunit methyltransferase A from Campylobacter concisus (strain 13826).